A 286-amino-acid chain; its full sequence is 4-hydroxy-3-methylbut-2-enyl diphosphate reductase (286 aa).

Cys12 is a binding site for [4Fe-4S] cluster. Residues His47 and His80 each coordinate (2E)-4-hydroxy-3-methylbut-2-enyl diphosphate. Positions 47 and 80 each coordinate dimethylallyl diphosphate. Isopentenyl diphosphate-binding residues include His47 and His80. Cys102 is a [4Fe-4S] cluster binding site. His130 provides a ligand contact to (2E)-4-hydroxy-3-methylbut-2-enyl diphosphate. Position 130 (His130) interacts with dimethylallyl diphosphate. An isopentenyl diphosphate-binding site is contributed by His130. Glu132 functions as the Proton donor in the catalytic mechanism. Thr170 provides a ligand contact to (2E)-4-hydroxy-3-methylbut-2-enyl diphosphate. Cys198 contacts [4Fe-4S] cluster. (2E)-4-hydroxy-3-methylbut-2-enyl diphosphate contacts are provided by Ser226, Asn228, and Ser270. The dimethylallyl diphosphate site is built by Ser226, Asn228, and Ser270. Residues Ser226, Asn228, and Ser270 each coordinate isopentenyl diphosphate.

Belongs to the IspH family. [4Fe-4S] cluster is required as a cofactor.

It catalyses the reaction isopentenyl diphosphate + 2 oxidized [2Fe-2S]-[ferredoxin] + H2O = (2E)-4-hydroxy-3-methylbut-2-enyl diphosphate + 2 reduced [2Fe-2S]-[ferredoxin] + 2 H(+). The catalysed reaction is dimethylallyl diphosphate + 2 oxidized [2Fe-2S]-[ferredoxin] + H2O = (2E)-4-hydroxy-3-methylbut-2-enyl diphosphate + 2 reduced [2Fe-2S]-[ferredoxin] + 2 H(+). Its pathway is isoprenoid biosynthesis; dimethylallyl diphosphate biosynthesis; dimethylallyl diphosphate from (2E)-4-hydroxy-3-methylbutenyl diphosphate: step 1/1. The protein operates within isoprenoid biosynthesis; isopentenyl diphosphate biosynthesis via DXP pathway; isopentenyl diphosphate from 1-deoxy-D-xylulose 5-phosphate: step 6/6. In terms of biological role, catalyzes the conversion of 1-hydroxy-2-methyl-2-(E)-butenyl 4-diphosphate (HMBPP) into a mixture of isopentenyl diphosphate (IPP) and dimethylallyl diphosphate (DMAPP). Acts in the terminal step of the DOXP/MEP pathway for isoprenoid precursor biosynthesis. This chain is 4-hydroxy-3-methylbut-2-enyl diphosphate reductase, found in Desulfovibrio desulfuricans (strain ATCC 27774 / DSM 6949 / MB).